A 256-amino-acid chain; its full sequence is Agamous-like MADS-box protein AGL18 (256 aa).

The 61-residue stretch at 1–61 folds into the MADS-box domain; it reads MGRGRIEIKK…GKIYDFSSVC (61 aa). The K-box domain maps to 94-184; it reads NEAVLRNDDS…RKQVEMLGRG (91 aa). The tract at residues 179–232 is disordered; it reads EMLGRGSGPKVLNERPQDSSPEADPESSSSEEDENDNEEHHSDTSLQLGLSSTG. Over residues 199 to 215 the composition is skewed to acidic residues; sequence PEADPESSSSEEDENDN. A compositionally biased stretch (polar residues) spans 222 to 232; the sequence is TSLQLGLSSTG.

As to expression, mostly expressed in pollen, roots, flowers and siliques, and to a lower extent, in stems and leaves. Expressed in the endosperm and in developing male and female gametophytes. Also present in seedlings.

The protein localises to the nucleus. Probable transcription factor involved in the negative regulation of flowering, probably through the photoperiodic pathway. Prevents premature flowering. Downstream regulator of a subset of the MIKC* MADS-controlled genes required during pollen maturation. The protein is Agamous-like MADS-box protein AGL18 (AGL18) of Arabidopsis thaliana (Mouse-ear cress).